A 152-amino-acid polypeptide reads, in one-letter code: Transcriptional repressor NrdR (152 aa).

A zinc finger lies at C3–C34. Positions L49–V139 constitute an ATP-cone domain.

Belongs to the NrdR family. Requires Zn(2+) as cofactor.

Functionally, negatively regulates transcription of bacterial ribonucleotide reductase nrd genes and operons by binding to NrdR-boxes. The polypeptide is Transcriptional repressor NrdR (Bacillus subtilis (strain 168)).